Reading from the N-terminus, the 106-residue chain is MEQFKHIDVQGAHALISRGEARLVDIRDPQSFAVAHAQSAFHLTNDSIVNFMQQVEFEQPVLVMCYHGISSQGAAQYLVNQGFEEVYSVDGGFEAWHRASLPVEAS.

The Rhodanese domain occupies 17-105 (SRGEARLVDI…WHRASLPVEA (89 aa)). Cysteine 65 functions as the Cysteine persulfide intermediate in the catalytic mechanism.

The protein belongs to the GlpE family.

Its subcellular location is the cytoplasm. The enzyme catalyses thiosulfate + hydrogen cyanide = thiocyanate + sulfite + 2 H(+). The catalysed reaction is thiosulfate + [thioredoxin]-dithiol = [thioredoxin]-disulfide + hydrogen sulfide + sulfite + 2 H(+). In terms of biological role, transferase that catalyzes the transfer of sulfur from thiosulfate to thiophilic acceptors such as cyanide or dithiols. May function in a CysM-independent thiosulfate assimilation pathway by catalyzing the conversion of thiosulfate to sulfite, which can then be used for L-cysteine biosynthesis. This chain is Thiosulfate sulfurtransferase GlpE, found in Vibrio vulnificus (strain CMCP6).